Reading from the N-terminus, the 335-residue chain is Capsular polysaccharide phosphotransferase WcwK (335 aa).

This sequence belongs to the stealth family.

This is Capsular polysaccharide phosphotransferase WcwK (wcwK) from Streptococcus pneumoniae.